We begin with the raw amino-acid sequence, 940 residues long: Isoleucine--tRNA ligase (940 aa).

The 'HIGH' region motif lies at 58 to 68 (PYANGSIHIGH). An L-isoleucyl-5'-AMP-binding site is contributed by E564. Positions 605–609 (KMSKS) match the 'KMSKS' region motif. K608 contributes to the ATP binding site. The Zn(2+) site is built by C903, C906, C923, and C926.

The protein belongs to the class-I aminoacyl-tRNA synthetase family. IleS type 1 subfamily. In terms of assembly, monomer. It depends on Zn(2+) as a cofactor.

It is found in the cytoplasm. The enzyme catalyses tRNA(Ile) + L-isoleucine + ATP = L-isoleucyl-tRNA(Ile) + AMP + diphosphate. Catalyzes the attachment of isoleucine to tRNA(Ile). As IleRS can inadvertently accommodate and process structurally similar amino acids such as valine, to avoid such errors it has two additional distinct tRNA(Ile)-dependent editing activities. One activity is designated as 'pretransfer' editing and involves the hydrolysis of activated Val-AMP. The other activity is designated 'posttransfer' editing and involves deacylation of mischarged Val-tRNA(Ile). This is Isoleucine--tRNA ligase from Shewanella sp. (strain W3-18-1).